A 692-amino-acid chain; its full sequence is E3 ubiquitin-protein ligase MARCHF7 (692 aa).

An N-acetylmethionine modification is found at M1. 6 disordered regions span residues 1–165 (MESK…SHRS), 201–280 (STNH…GRRT), 296–343 (FFSR…RASE), 360–425 (LSQN…HLFR), 440–474 (SLGAAASRPQASGASGNASASGSTPDLPQGGRNTG), and 512–532 (SSADGKSEKAKSAPSRDPEKL). Residues 37-48 (YHSRDSSFRLDS) are compositionally biased toward basic and acidic residues. Composition is skewed to polar residues over residues 61–83 (PYQSTWYSESEITQGARSRSQNQ) and 95–132 (SCTNCTSTSAGRNIGSGLNTLSDSSWRPGQVPRSSSMV). A compositionally biased stretch (basic and acidic residues) spans 140 to 153 (LMRERRDLERRRDS). Positions 201 to 214 (STNHQLPSEHQTVP) are enriched in polar residues. Residues 215 to 233 (SSRDSSRSSFRSHFSPRQS) are compositionally biased toward low complexity. A compositionally biased stretch (polar residues) spans 235–272 (SFRNSSHPAFSYLSSRNETPTISSSERAGSSQRPFQES). Residues 296–305 (FFSRRSSQDS) show a composition bias toward low complexity. Positions 306 to 336 (LNTRSLSSENYISPRTLTSQSRNNGASSSEV) are enriched in polar residues. Phosphoserine occurs at positions 318 and 389. Over residues 450 to 462 (ASGASGNASASGS) the composition is skewed to low complexity. The span at 516–532 (GKSEKAKSAPSRDPEKL) shows a compositional bias: basic and acidic residues. An RING-CH-type zinc finger spans residues 545-615 (DEEEEGDLCR…ELCKEKLQLN (71 aa)). 8 residues coordinate Zn(2+): C553, C556, C571, C573, H581, C584, C605, and C608. T687 is subject to Phosphothreonine. S688 is modified (phosphoserine).

Its subcellular location is the cytoplasm. It catalyses the reaction S-ubiquitinyl-[E2 ubiquitin-conjugating enzyme]-L-cysteine + [acceptor protein]-L-lysine = [E2 ubiquitin-conjugating enzyme]-L-cysteine + N(6)-ubiquitinyl-[acceptor protein]-L-lysine.. The protein operates within protein modification; protein ubiquitination. Functionally, E3 ubiquitin-protein ligase which may specifically enhance the E2 activity of HIP2. E3 ubiquitin ligases accept ubiquitin from an E2 ubiquitin-conjugating enzyme in the form of a thioester and then directly transfer the ubiquitin to targeted substrates. May be involved in T-cell proliferation by regulating LIF secretion. May play a role in lysosome homeostasis. Promotes 'Lys-6', 'Lys-11' and 'Lys-63'-linked mixed polyubiquitination on ATG14 leading to the inhibition of autophagy by impairing the interaction between ATG14 and STX7. Participates in the dopamine-mediated negative regulation of the NLRP3 inflammasome by promoting its uibiquitination and subsequent degradation. The protein is E3 ubiquitin-protein ligase MARCHF7 (Marchf7) of Rattus norvegicus (Rat).